The chain runs to 130 residues: Small ribosomal subunit protein uS8 (130 aa).

The protein belongs to the universal ribosomal protein uS8 family. Part of the 30S ribosomal subunit. Contacts proteins S5 and S12.

Functionally, one of the primary rRNA binding proteins, it binds directly to 16S rRNA central domain where it helps coordinate assembly of the platform of the 30S subunit. The protein is Small ribosomal subunit protein uS8 of Shewanella frigidimarina (strain NCIMB 400).